We begin with the raw amino-acid sequence, 400 residues long: Elongation factor Tu (400 aa).

Residues 10–209 enclose the tr-type G domain; the sequence is KPHVNIGTIG…NVDAYIPTPE (200 aa). A G1 region spans residues 19-26; that stretch reads GHVDHGKT. Position 19-26 (19-26) interacts with GTP; sequence GHVDHGKT. Thr-26 provides a ligand contact to Mg(2+). The tract at residues 60-64 is G2; it reads GITIN. The segment at 81 to 84 is G3; that stretch reads DCPG. GTP contacts are provided by residues 81-85 and 136-139; these read DCPGH and NKSD. The segment at 136–139 is G4; it reads NKSD. The segment at 174–176 is G5; it reads SGL.

Belongs to the TRAFAC class translation factor GTPase superfamily. Classic translation factor GTPase family. EF-Tu/EF-1A subfamily. In terms of assembly, monomer.

It localises to the cytoplasm. It carries out the reaction GTP + H2O = GDP + phosphate + H(+). Its function is as follows. GTP hydrolase that promotes the GTP-dependent binding of aminoacyl-tRNA to the A-site of ribosomes during protein biosynthesis. The sequence is that of Elongation factor Tu from Desulforamulus reducens (strain ATCC BAA-1160 / DSM 100696 / MI-1) (Desulfotomaculum reducens).